A 262-amino-acid polypeptide reads, in one-letter code: Phosphatidylserine decarboxylase proenzyme (262 aa).

Catalysis depends on charge relay system; for autoendoproteolytic cleavage activity residues Asp86, His142, and Ser226. The active-site Schiff-base intermediate with substrate; via pyruvic acid; for decarboxylase activity is Ser226. The residue at position 226 (Ser226) is a Pyruvic acid (Ser); by autocatalysis.

It belongs to the phosphatidylserine decarboxylase family. PSD-B subfamily. Prokaryotic type I sub-subfamily. In terms of assembly, heterodimer of a large membrane-associated beta subunit and a small pyruvoyl-containing alpha subunit. Requires pyruvate as cofactor. Is synthesized initially as an inactive proenzyme. Formation of the active enzyme involves a self-maturation process in which the active site pyruvoyl group is generated from an internal serine residue via an autocatalytic post-translational modification. Two non-identical subunits are generated from the proenzyme in this reaction, and the pyruvate is formed at the N-terminus of the alpha chain, which is derived from the carboxyl end of the proenzyme. The autoendoproteolytic cleavage occurs by a canonical serine protease mechanism, in which the side chain hydroxyl group of the serine supplies its oxygen atom to form the C-terminus of the beta chain, while the remainder of the serine residue undergoes an oxidative deamination to produce ammonia and the pyruvoyl prosthetic group on the alpha chain. During this reaction, the Ser that is part of the protease active site of the proenzyme becomes the pyruvoyl prosthetic group, which constitutes an essential element of the active site of the mature decarboxylase.

It localises to the cell membrane. The catalysed reaction is a 1,2-diacyl-sn-glycero-3-phospho-L-serine + H(+) = a 1,2-diacyl-sn-glycero-3-phosphoethanolamine + CO2. It participates in phospholipid metabolism; phosphatidylethanolamine biosynthesis; phosphatidylethanolamine from CDP-diacylglycerol: step 2/2. In terms of biological role, catalyzes the formation of phosphatidylethanolamine (PtdEtn) from phosphatidylserine (PtdSer). The chain is Phosphatidylserine decarboxylase proenzyme from Bacillus cereus (strain AH820).